The chain runs to 167 residues: Crossover junction endodeoxyribonuclease RuvC (167 aa).

Residues aspartate 11, glutamate 71, and aspartate 143 contribute to the active site. Residues aspartate 11, glutamate 71, and aspartate 143 each contribute to the Mg(2+) site.

It belongs to the RuvC family. In terms of assembly, homodimer which binds Holliday junction (HJ) DNA. The HJ becomes 2-fold symmetrical on binding to RuvC with unstacked arms; it has a different conformation from HJ DNA in complex with RuvA. In the full resolvosome a probable DNA-RuvA(4)-RuvB(12)-RuvC(2) complex forms which resolves the HJ. The cofactor is Mg(2+).

It is found in the cytoplasm. It catalyses the reaction Endonucleolytic cleavage at a junction such as a reciprocal single-stranded crossover between two homologous DNA duplexes (Holliday junction).. In terms of biological role, the RuvA-RuvB-RuvC complex processes Holliday junction (HJ) DNA during genetic recombination and DNA repair. Endonuclease that resolves HJ intermediates. Cleaves cruciform DNA by making single-stranded nicks across the HJ at symmetrical positions within the homologous arms, yielding a 5'-phosphate and a 3'-hydroxyl group; requires a central core of homology in the junction. The consensus cleavage sequence is 5'-(A/T)TT(C/G)-3'. Cleavage occurs on the 3'-side of the TT dinucleotide at the point of strand exchange. HJ branch migration catalyzed by RuvA-RuvB allows RuvC to scan DNA until it finds its consensus sequence, where it cleaves and resolves the cruciform DNA. The protein is Crossover junction endodeoxyribonuclease RuvC of Hyphomonas neptunium (strain ATCC 15444).